The following is a 574-amino-acid chain: Laccase-12 (574 aa).

Residues 1–27 (MAAASSVLRCCLLVAALMTLSAMGAEA) form the signal peptide. Plastocyanin-like domains follow at residues 35 to 151 (DVQT…PPAG) and 161 to 314 (EEVP…YDDP). N-linked (GlcNAc...) asparagine glycosylation is present at Asn81. 4 residues coordinate Cu cation: His85, His87, His130, and His132. Residues Asn173, Asn190, Asn206, Asn242, Asn302, Asn335, Asn342, Asn381, Asn388, Asn398, Asn434, Asn441, and Asn447 are each glycosylated (N-linked (GlcNAc...) asparagine). One can recognise a Plastocyanin-like 3 domain in the interval 424-558 (NFPYYPLNPF…KMAWLVLDGS (135 aa)). Positions 475, 478, 480, 537, 538, 539, and 543 each coordinate Cu cation.

It belongs to the multicopper oxidase family. Cu cation serves as cofactor.

The protein localises to the secreted. It localises to the extracellular space. The protein resides in the apoplast. The catalysed reaction is 4 hydroquinone + O2 = 4 benzosemiquinone + 2 H2O. In terms of biological role, lignin degradation and detoxification of lignin-derived products. The polypeptide is Laccase-12 (LAC12) (Oryza sativa subsp. japonica (Rice)).